The primary structure comprises 352 residues: Homocitrate synthase, omega subunit (352 aa).

This sequence belongs to the alpha-IPM synthase/homocitrate synthase family. As to quaternary structure, heterodimer of an alpha and an omega chain.

It catalyses the reaction acetyl-CoA + 2-oxoglutarate + H2O = (2R)-homocitrate + CoA + H(+). Its function is as follows. This protein is a Fe-Mo-cofactor biosynthetic component. The polypeptide is Homocitrate synthase, omega subunit (nifV-OMEGA) (Clostridium pasteurianum).